Here is a 749-residue protein sequence, read N- to C-terminus: Basic juvenile hormone-suppressible protein 2 (749 aa).

A signal peptide spans 1 to 14 (MRAVLLFVVSLAAL).

Belongs to the hemocyanin family. In terms of tissue distribution, fat body, and hemolymph of larvae.

This Trichoplusia ni (Cabbage looper) protein is Basic juvenile hormone-suppressible protein 2 (BJSP-2).